The sequence spans 528 residues: MAGYKPVVIQTYPVLGEKITQDTLYWNNYKTPVQIKEFGAVSKVDFSPQPPYNYAVTASSRIHIYGRYSQEPVKTFSRFKDTAYCATFRQDGQLLVAGSEDGVVQLFDISGRAPLRQFEGHTKAVHTVDFTADKYHVVSGADDYTVKLWDIPNSKEILTFKEHSDYVRCGCASKLNPDLFVTGSYDHTVKMFDARTNKNVLCVEHGQPVESVLLFPSGGLLVSAGGRYVKVWDMLKGGQLLVSLKNHHKTVTCLCLSSSGQRLLSGSLDRKVKIYSTTSYKVVHSFDYAASILSLALSHQDETVVVGMTNGILSVKHRKSEAKKESLPRRRRPAYRTFIKGKIYTKQRDDIVVTRPAKKHLEWYDRDLKSFRISKALDRVLEPNCVIKTPEVTVSIIKELNRRGVLANALAGRDEKEITRVLNFLIRNLSQPRFAPVLINAAEIIIDIYLPVIGQSSVVDKKFIVLQGLVEKEIDYQRELLETLGMMDMLFATMTRNGSAPVWEHVPAELPEEKTESPRQPSDTDKNS.

An N-acetylalanine modification is found at Ala-2. 7 WD repeats span residues 36-75, 78-117, 120-159, 162-202, 204-242, 246-285, and 287-326; these read KEFG…PVKT, RFKD…PLRQ, GHTK…EILT, EHSD…NVLC, EHGQ…QLLV, NHHK…VVHS, and DYAA…KKES. Lys-249 participates in a covalent cross-link: Glycyl lysine isopeptide (Lys-Gly) (interchain with G-Cter in SUMO2). Positions 508 to 528 are disordered; that stretch reads AELPEEKTESPRQPSDTDKNS. The span at 511-528 shows a compositional bias: basic and acidic residues; the sequence is PEEKTESPRQPSDTDKNS.

In terms of assembly, part of the small subunit (SSU) processome, composed of more than 70 proteins and the RNA chaperone small nucleolar RNA (snoRNA) U3. May be a component of the proposed t-UTP subcomplex of the ribosomal small subunit (SSU) processome containing at least UTP4, WDR43, HEATR1, UTP15, WDR75. Interacts directly with UTP4 and WDR43.

It is found in the nucleus. The protein resides in the nucleolus. Functionally, ribosome biogenesis factor. Involved in nucleolar processing of pre-18S ribosomal RNA. Required for optimal pre-ribosomal RNA transcription by RNA polymerase I. Part of the small subunit (SSU) processome, first precursor of the small eukaryotic ribosomal subunit. During the assembly of the SSU processome in the nucleolus, many ribosome biogenesis factors, an RNA chaperone and ribosomal proteins associate with the nascent pre-rRNA and work in concert to generate RNA folding, modifications, rearrangements and cleavage as well as targeted degradation of pre-ribosomal RNA by the RNA exosome. The chain is U3 small nucleolar RNA-associated protein 15 homolog from Rattus norvegicus (Rat).